The primary structure comprises 208 residues: Superoxide dismutase [Mn] 2 (208 aa).

H28, H83, D165, and H169 together coordinate Mn(2+).

It belongs to the iron/manganese superoxide dismutase family. In terms of assembly, homodimer. Mn(2+) is required as a cofactor.

The catalysed reaction is 2 superoxide + 2 H(+) = H2O2 + O2. Functionally, destroys superoxide anion radicals which are normally produced within the cells and which are toxic to biological systems. This Bacillus anthracis protein is Superoxide dismutase [Mn] 2 (sodA2).